The chain runs to 491 residues: Cysteine--tRNA ligase (491 aa).

C29 contributes to the Zn(2+) binding site. Positions 31 to 41 (PTVYDFAHIGN) match the 'HIGH' region motif. Residues C227, H252, and E256 each coordinate Zn(2+). A 'KMSKS' region motif is present at residues 285 to 289 (KMSKS). Position 288 (K288) interacts with ATP.

This sequence belongs to the class-I aminoacyl-tRNA synthetase family. As to quaternary structure, monomer. Zn(2+) serves as cofactor.

The protein localises to the cytoplasm. It carries out the reaction tRNA(Cys) + L-cysteine + ATP = L-cysteinyl-tRNA(Cys) + AMP + diphosphate. The polypeptide is Cysteine--tRNA ligase (Rhodopseudomonas palustris (strain TIE-1)).